Consider the following 234-residue polypeptide: Phosphoribosylaminoimidazole-succinocarboxamide synthase (234 aa).

It belongs to the SAICAR synthetase family.

The catalysed reaction is 5-amino-1-(5-phospho-D-ribosyl)imidazole-4-carboxylate + L-aspartate + ATP = (2S)-2-[5-amino-1-(5-phospho-beta-D-ribosyl)imidazole-4-carboxamido]succinate + ADP + phosphate + 2 H(+). The protein operates within purine metabolism; IMP biosynthesis via de novo pathway; 5-amino-1-(5-phospho-D-ribosyl)imidazole-4-carboxamide from 5-amino-1-(5-phospho-D-ribosyl)imidazole-4-carboxylate: step 1/2. This chain is Phosphoribosylaminoimidazole-succinocarboxamide synthase, found in Staphylococcus carnosus (strain TM300).